The sequence spans 639 residues: Actin assembly-inducing protein (639 aa).

A signal peptide spans Met-1–Ala-29. Disordered stretches follow at residues Ser-36–Asp-71, Arg-132–Phe-212, Leu-285–Glu-308, and Leu-320–Glu-341. The span at Asp-41 to Pro-52 shows a compositional bias: acidic residues. The span at Glu-62–Asp-71 shows a compositional bias: basic and acidic residues. Residues Asp-190–Pro-210 show a composition bias toward polar residues. 2 tandem repeats follow at residues Asp-264–Phe-298 and Glu-299–Phe-333. The tract at residues Asp-264–Phe-333 is 5 X approximate tandem repeats, Pro-rich. A 3; approximate repeat occupies Glu-334–Ser-378. Residues Arg-360–Asp-362 carry the Cell attachment site motif. 2 disordered regions span residues Arg-372–Lys-459 and Lys-474–Asn-610. One copy of the 4; approximate repeat lies at Asp-379–Thr-417. Acidic residues predominate over residues Phe-409–Ile-422. The stretch at Thr-418 to Ile-422 is one 5; truncated repeat. Basic and acidic residues predominate over residues Asp-423–Thr-433. 2 stretches are compositionally biased toward low complexity: residues Ser-450–Lys-459 and Lys-490–Lys-509. Composition is skewed to basic and acidic residues over residues Glu-553–Glu-572 and Gly-588–Gly-609. A helical membrane pass occupies residues Thr-613–Ile-633.

Its subcellular location is the cell membrane. Its function is as follows. Virulence factor required for host cell microfilament interaction. It induces actin assembly around the bacteria to allow it to move within the cytoplasm. It is involved in the actin polymerization process. It seems to act as a nucleator that induces the reorganization of the actin cytoskeleton. This Listeria monocytogenes serovar 1/2a (strain ATCC BAA-679 / EGD-e) protein is Actin assembly-inducing protein (actA).